The primary structure comprises 274 residues: Protein LIKE COV 3 (274 aa).

Over 1–60 the chain is Cytoplasmic; sequence METRERDLERLIPMHKSGASPRDVVLSVPPSPLASPIHVAGKEAIYKVIRSWASKKFMTG. A helical membrane pass occupies residues 61–81; it reads CVILLPIAVTFYFTWWFIHFV. At 82-93 the chain is on the extracellular side; the sequence is DGFFSPIYTHLG. Residues 94–114 form a helical membrane-spanning segment; sequence INMFGLGFVTSITFIFMVGVF. Topologically, residues 115–274 are cytoplasmic; sequence MSSWLGASVL…VCLSLVLAWT (160 aa).

Belongs to the plant COV1 protein family.

It localises to the membrane. This chain is Protein LIKE COV 3, found in Arabidopsis thaliana (Mouse-ear cress).